The sequence spans 514 residues: HMG box-containing protein 1 (514 aa).

Positions 150–182 are disordered; that stretch reads ARPPPVSSSSKSEPAFPHHHWKEETPVRHERAN. A compositionally biased stretch (basic and acidic residues) spans 170–182; sequence WKEETPVRHERAN. Residues 203-345 enclose the AXH domain; that stretch reads WCNSWPSTVW…PPGHPDAINF (143 aa). Positions 434-502 form a DNA-binding region, HMG box; it reads CKRPMNAFML…EQKRLNPDCW (69 aa).

Binds the second PAH repeat of SIN3A. Binds TCF4. Binds RB1. Post-translationally, ubiquitinated by the CTLH E3 ubiquitin-protein ligase complex, leading to subsequent proteasomal degradation.

Its subcellular location is the nucleus. In terms of biological role, transcriptional repressor that binds to the promoter region of target genes. Plays a role in the regulation of the cell cycle and of the Wnt pathway. Binds preferentially to the sequence 5'-TTCATTCATTCA-3'. Binding to the histone H1.0 promoter is enhanced by interaction with RB1. Disrupts the interaction between DNA and TCF4. This Homo sapiens (Human) protein is HMG box-containing protein 1 (HBP1).